The following is a 1806-amino-acid chain: uncharacterized protein (1806 aa).

Disordered regions lie at residues 38–131 and 158–282; these read EASG…SPLF and KAVS…KPRP. The span at 51–70 shows a compositional bias: low complexity; it reads KSPLRSPARLLPLPRLAPKP. Phosphoserine is present on residues Ser-52, Ser-56, Ser-79, Ser-87, Ser-88, Ser-92, and Ser-128. Low complexity predominate over residues 82–100; that stretch reads PSLRPSSTGPSPSGGLSEE. Residues 226 to 236 show a composition bias toward basic and acidic residues; the sequence is DTARPLVEPRP. 2 positions are modified to phosphoserine: Ser-244 and Ser-284. 4 disordered regions span residues 299–320, 355–431, 456–604, and 627–696; these read RKVA…ERPR, KEKM…GGEW, SESP…PEDD, and QSGR…ELRP. Residue Ser-366 is modified to Phosphoserine. The residue at position 378 (Thr-378) is a Phosphothreonine. A Phosphoserine modification is found at Ser-384. The span at 386 to 400 shows a compositional bias: basic and acidic residues; it reads WEEKAKLDPEPEKAA. Ser-404 carries the post-translational modification Phosphoserine. Over residues 412 to 422 the composition is skewed to basic and acidic residues; the sequence is ELAEVKSRVAD. Low complexity predominate over residues 456–470; the sequence is SESPLATPASPSAAP. Ser-458 and Ser-508 each carry phosphoserine. Residues 514–523 are compositionally biased toward polar residues; the sequence is LFSSSASSNE. Basic and acidic residues-rich tracts occupy residues 524–549 and 564–573; these read VKYE…EGHS and TLRDKSRQTE. The residue at position 600 (Thr-600) is a Phosphothreonine. Basic and acidic residues-rich tracts occupy residues 641-652 and 661-674; these read AHARVSEPRPRP and DPPD…ENSR. Ser-749 is modified (phosphoserine). 3 disordered regions span residues 860 to 901, 969 to 989, and 1000 to 1019; these read QHEG…QART, SPHV…ALRK, and QEVN…KQGS. Positions 889–900 are enriched in polar residues; that stretch reads RATNGPSDSQAR. Phosphoserine is present on residues Ser-969 and Ser-981. The span at 969 to 978 shows a compositional bias: basic and acidic residues; sequence SPHVGHRRTD. Thr-1059 carries the post-translational modification Phosphothreonine. 2 positions are modified to phosphoserine: Ser-1063 and Ser-1154. The interval 1134-1178 is disordered; that stretch reads RGSEDGPRPQSNWKESANKMSPSGGAPQTTPTLRSRPKDLPVRRK. Residues 1142–1166 show a composition bias toward polar residues; sequence PQSNWKESANKMSPSGGAPQTTPTL. Thr-1163 bears the Phosphothreonine mark. Basic and acidic residues predominate over residues 1169 to 1178; it reads RPKDLPVRRK. A phosphothreonine mark is found at Thr-1179 and Thr-1185. Disordered regions lie at residues 1216-1265 and 1291-1493; these read PGEA…PASS and KSSP…VASV. Ser-1224 carries the post-translational modification Phosphoserine. At Thr-1226 the chain carries Phosphothreonine. Composition is skewed to basic and acidic residues over residues 1244-1254 and 1317-1331; these read EQRRRSLKEMP and DPRK…DRKA. Ser-1366 carries the post-translational modification Phosphoserine. Basic and acidic residues-rich tracts occupy residues 1393–1410 and 1426–1437; these read DHPR…RAYS and HEARERRREQPK. The residue at position 1441 (Ser-1441) is a Phosphoserine. A compositionally biased stretch (basic and acidic residues) spans 1462–1483; sequence DSHKVLPRDLEKEDAPQEKERP. Ser-1488 and Ser-1506 each carry phosphoserine. Disordered stretches follow at residues 1512–1627 and 1642–1806; these read QLKQ…KRVD and ALKT…ENQV. Over residues 1522–1531 the composition is skewed to basic and acidic residues; that stretch reads TEPKDTDTLV. Residues 1537 to 1568 are compositionally biased toward polar residues; the sequence is QYGTWTEQCQSGESLATESPDSSATSTRKQPP. 2 positions are modified to phosphoserine: Ser-1555 and Ser-1662. Basic residues predominate over residues 1649–1666; the sequence is LSKRSRRRAPISHSLRRS. Basic and acidic residues-rich tracts occupy residues 1667 to 1677 and 1689 to 1714; these read RFSESESRSPL and DSTE…ERTP. Phosphoserine occurs at positions 1701, 1757, 1760, and 1786. Low complexity predominate over residues 1753–1764; the sequence is PQPKSPKSPFQP.

This is an uncharacterized protein from Homo sapiens (Human).